The following is a 233-amino-acid chain: Partner of Y14 and mago (233 aa).

Residues 1–153 (MTTYSTDSQG…SNNSDSTVDE (153 aa)) form a disordered region. Positions 62–97 (EVVQKAKEKRERERLRQAREEQQRKEQQNKKQQAGA) form a coiled coil. Residues 65–90 (QKAKEKRERERLRQAREEQQRKEQQN) are compositionally biased toward basic and acidic residues. Positions 122–142 (KQPQQHTKSSQQKSTTAAAAA) are enriched in low complexity. The stretch at 167-199 (ADAQQLEVAKKLRKLRKKIREIEAIETKLRSTD) forms a coiled coil.

This sequence belongs to the pym family. Interacts (via N-terminus) with mago and tsu/Y14; the interaction is direct.

It localises to the cytoplasm. It is found in the nucleus. Functionally, regulator of the exon junction complex (EJC), a multiprotein complex that associates immediately upstream of the exon-exon junction on mRNAs and serves as a positional landmarks for the intron exon structure of genes and directs post-transcriptional processes in the cytoplasm such as mRNA export, nonsense-mediated mRNA decay (NMD) or translation. The polypeptide is Partner of Y14 and mago (Anopheles gambiae (African malaria mosquito)).